An 851-amino-acid chain; its full sequence is Protein FAM13B (851 aa).

The Rho-GAP domain occupies 23-212 (IPLDELQQGG…GLLENYYEFF (190 aa)). Residues 556-565 (IKDAKHKNSD) are compositionally biased toward basic and acidic residues. A disordered region spans residues 556–611 (IKDAKHKNSDGEFAPQTRPRSNTLPKSFGSSLDHEDGESEGEPRVIQKEKTPSKEA). The span at 573–585 (RPRSNTLPKSFGS) shows a compositional bias: polar residues. The segment covering 596 to 611 (GEPRVIQKEKTPSKEA) has biased composition (basic and acidic residues).

The protein belongs to the FAM13 family.

In Mus musculus (Mouse), this protein is Protein FAM13B (Fam13b).